The primary structure comprises 94 residues: Integration host factor subunit beta (94 aa).

The protein belongs to the bacterial histone-like protein family. In terms of assembly, heterodimer of an alpha and a beta chain.

In terms of biological role, this protein is one of the two subunits of integration host factor, a specific DNA-binding protein that functions in genetic recombination as well as in transcriptional and translational control. This chain is Integration host factor subunit beta, found in Buchnera aphidicola subsp. Acyrthosiphon pisum (strain 5A).